Reading from the N-terminus, the 985-residue chain is DNA ligase 4 (985 aa).

Disordered stretches follow at residues 1-27 and 43-70; these read MDRL…RNKH and LNGN…QTLS. Over residues 10–20 the composition is skewed to basic and acidic residues; the sequence is ETERELDEKYP. The segment covering 46 to 61 has biased composition (basic residues); sequence NKKRPTGPAAARKKLG. The ATP site is built by glutamate 310, lysine 312, leucine 313, arginine 317, glutamate 379, phenylalanine 420, glutamate 480, lysine 485, lysine 502, and lysine 504. Catalysis depends on lysine 312, which acts as the N6-AMP-lysine intermediate. Residue glutamate 379 participates in Mg(2+) binding. Residue glutamate 480 participates in Mg(2+) binding. BRCT domains lie at 711–804 and 878–983; these read PSGH…PDLL and LRGW…RFAP.

Belongs to the ATP-dependent DNA ligase family. It depends on Mg(2+) as a cofactor.

The protein resides in the nucleus. It catalyses the reaction ATP + (deoxyribonucleotide)n-3'-hydroxyl + 5'-phospho-(deoxyribonucleotide)m = (deoxyribonucleotide)n+m + AMP + diphosphate.. Functionally, DNA ligase involved in DNA non-homologous end joining (NHEJ); required for double-strand break (DSB) repair. This Coccidioides immitis (strain RS) (Valley fever fungus) protein is DNA ligase 4 (LIG4).